The primary structure comprises 565 residues: Urocanate hydratase (565 aa).

NAD(+) contacts are provided by residues 61 to 62, Gln139, 185 to 187, Glu205, Arg210, 251 to 252, 272 to 276, 282 to 283, and Tyr331; these read GG, GMG, NA, QTSAH, and YL. Cys419 is an active-site residue. The segment at 453–472 is disordered; the sequence is LDSGSVSSPNRETESMKDGS. The segment covering 463–472 has biased composition (basic and acidic residues); sequence RETESMKDGS. Gly501 provides a ligand contact to NAD(+).

This sequence belongs to the urocanase family. NAD(+) serves as cofactor.

The protein localises to the cytoplasm. It carries out the reaction 4-imidazolone-5-propanoate = trans-urocanate + H2O. Its pathway is amino-acid degradation; L-histidine degradation into L-glutamate; N-formimidoyl-L-glutamate from L-histidine: step 2/3. Its function is as follows. Catalyzes the conversion of urocanate to 4-imidazolone-5-propionate. The chain is Urocanate hydratase from Pseudomonas syringae.